Here is a 231-residue protein sequence, read N- to C-terminus: Enolase-phosphatase E1 (231 aa).

Residues 206-231 (LLERPGNAPQPKHSHPKISSFENFNP) form a disordered region.

Belongs to the HAD-like hydrolase superfamily. MasA/MtnC family. Monomer. It depends on Mg(2+) as a cofactor.

It catalyses the reaction 5-methylsulfanyl-2,3-dioxopentyl phosphate + H2O = 1,2-dihydroxy-5-(methylsulfanyl)pent-1-en-3-one + phosphate. It functions in the pathway amino-acid biosynthesis; L-methionine biosynthesis via salvage pathway; L-methionine from S-methyl-5-thio-alpha-D-ribose 1-phosphate: step 3/6. Its pathway is amino-acid biosynthesis; L-methionine biosynthesis via salvage pathway; L-methionine from S-methyl-5-thio-alpha-D-ribose 1-phosphate: step 4/6. In terms of biological role, bifunctional enzyme that catalyzes the enolization of 2,3-diketo-5-methylthiopentyl-1-phosphate (DK-MTP-1-P) into the intermediate 2-hydroxy-3-keto-5-methylthiopentenyl-1-phosphate (HK-MTPenyl-1-P), which is then dephosphorylated to form the acireductone 1,2-dihydroxy-3-keto-5-methylthiopentene (DHK-MTPene). This chain is Enolase-phosphatase E1, found in Leptospira borgpetersenii serovar Hardjo-bovis (strain JB197).